The chain runs to 270 residues: Indole-3-glycerol phosphate synthase (270 aa).

Belongs to the TrpC family.

The catalysed reaction is 1-(2-carboxyphenylamino)-1-deoxy-D-ribulose 5-phosphate + H(+) = (1S,2R)-1-C-(indol-3-yl)glycerol 3-phosphate + CO2 + H2O. Its pathway is amino-acid biosynthesis; L-tryptophan biosynthesis; L-tryptophan from chorismate: step 4/5. The protein is Indole-3-glycerol phosphate synthase of Beutenbergia cavernae (strain ATCC BAA-8 / DSM 12333 / CCUG 43141 / JCM 11478 / NBRC 16432 / NCIMB 13614 / HKI 0122).